Here is a 324-residue protein sequence, read N- to C-terminus: Beta-ketoacyl-[acyl-carrier-protein] synthase III (324 aa).

Residues Cys114 and His246 contribute to the active site. The interval 247–251 is ACP-binding; the sequence is QANLR. Asn276 is an active-site residue.

This sequence belongs to the thiolase-like superfamily. FabH family. Homodimer.

The protein localises to the cytoplasm. It carries out the reaction malonyl-[ACP] + acetyl-CoA + H(+) = 3-oxobutanoyl-[ACP] + CO2 + CoA. It functions in the pathway lipid metabolism; fatty acid biosynthesis. Its function is as follows. Catalyzes the condensation reaction of fatty acid synthesis by the addition to an acyl acceptor of two carbons from malonyl-ACP. Catalyzes the first condensation reaction which initiates fatty acid synthesis and may therefore play a role in governing the total rate of fatty acid production. Possesses both acetoacetyl-ACP synthase and acetyl transacylase activities. Its substrate specificity determines the biosynthesis of branched-chain and/or straight-chain of fatty acids. In Campylobacter jejuni subsp. doylei (strain ATCC BAA-1458 / RM4099 / 269.97), this protein is Beta-ketoacyl-[acyl-carrier-protein] synthase III.